Consider the following 186-residue polypeptide: Lipid A acyltransferase PagP (186 aa).

Residues 1-19 form the signal peptide; that stretch reads MKRLISCLTIICALNRSAA. Active-site residues include His-60, Asp-103, and Ser-104.

The protein belongs to the lipid A palmitoyltransferase family. As to quaternary structure, homodimer.

It localises to the cell outer membrane. The catalysed reaction is a lipid A + a 1,2-diacyl-sn-glycero-3-phosphocholine = a hepta-acyl lipid A + a 2-acyl-sn-glycero-3-phosphocholine. It carries out the reaction a lipid IVA + a 1,2-diacyl-sn-glycero-3-phosphocholine = a lipid IVB + a 2-acyl-sn-glycero-3-phosphocholine. The enzyme catalyses a lipid IIA + a 1,2-diacyl-sn-glycero-3-phosphocholine = a lipid IIB + a 2-acyl-sn-glycero-3-phosphocholine. Transfers a fatty acid residue from the sn-1 position of a phospholipid to the N-linked hydroxyfatty acid chain on the proximal unit of lipid A or its precursors. Confers resistance to cationic antimicrobial peptides (CAMPs). Promotes the ability of L.pneumophila to replicate and/or survive in macrophages. Important for ability to kill macrophages and to promote the virulence. In Legionella pneumophila, this protein is Lipid A acyltransferase PagP.